The primary structure comprises 924 residues: 104 kDa microneme/rhoptry antigen (924 aa).

The first 19 residues, 1–19, serve as a signal peptide directing secretion; the sequence is MKFLILLFNILCLFPVLAA. The interval 490–907 is disordered; the sequence is SKKKLAPITE…KKPKKPDSAY (418 aa). Basic and acidic residues-rich tracts occupy residues 522 to 532 and 573 to 588; these read PGDKEGSEGHK and GPKD…EPRK. The segment covering 592–617 has biased composition (low complexity); that stretch reads PRTASPTRRPSPKLPQLSKLPKSTSP. The segment covering 653-673 has biased composition (basic and acidic residues); sequence SFKEKFYDDYSKAASRSKETK. Positions 724-736 are enriched in low complexity; that stretch reads SPSTSPSEFFTPP. Composition is skewed to basic and acidic residues over residues 737–747, 770–783, and 816–825; these read ESKRTRFHETP, KSPD…RSPS, and DPGRMAKDAS. Over residues 857–867 the composition is skewed to acidic residues; the sequence is DDEGTEADDEE. A compositionally biased stretch (basic and acidic residues) spans 868–878; that stretch reads THPPEERQKTE. Residues 879-901 are compositionally biased toward basic residues; sequence VRRRRPPKKPSKSPRPSKPKKPK. Residue Asp904 is the site of GPI-anchor amidated aspartate attachment. Positions 905 to 924 are cleaved as a propeptide — removed in mature form; sequence SAYIPSILAILVVSLIVGIL.

It localises to the cell membrane. This Theileria parva (East coast fever infection agent) protein is 104 kDa microneme/rhoptry antigen.